A 123-amino-acid chain; its full sequence is Small ribosomal subunit protein uS13 (123 aa).

Positions 93–123 (HRKGLPVRGQNTKNNARTRKGPAKAIAGKKK) are disordered. A compositionally biased stretch (basic residues) spans 108 to 123 (ARTRKGPAKAIAGKKK).

Belongs to the universal ribosomal protein uS13 family. As to quaternary structure, part of the 30S ribosomal subunit. Forms a loose heterodimer with protein S19. Forms two bridges to the 50S subunit in the 70S ribosome.

Located at the top of the head of the 30S subunit, it contacts several helices of the 16S rRNA. In the 70S ribosome it contacts the 23S rRNA (bridge B1a) and protein L5 of the 50S subunit (bridge B1b), connecting the 2 subunits; these bridges are implicated in subunit movement. Contacts the tRNAs in the A and P-sites. The polypeptide is Small ribosomal subunit protein uS13 (Leuconostoc citreum (strain KM20)).